Consider the following 105-residue polypeptide: Large ribosomal subunit protein eL36 (105 aa).

Residue lysine 62 is modified to N6-acetyllysine.

This sequence belongs to the eukaryotic ribosomal protein eL36 family. Component of the large ribosomal subunit.

It is found in the cytoplasm. Its subcellular location is the cytosol. Component of the large ribosomal subunit. The ribosome is a large ribonucleoprotein complex responsible for the synthesis of proteins in the cell. This is Large ribosomal subunit protein eL36 (RPL36) from Bos taurus (Bovine).